The primary structure comprises 116 residues: Probable early E4 11 kDa protein (116 aa).

The sequence is that of Probable early E4 11 kDa protein from Human adenovirus A serotype 12 (HAdV-12).